A 295-amino-acid chain; its full sequence is MMRILLFVATNLAVVLVASITLSLFGFNGFMAANGVDLNLGQLLVFCAVFGFAGSLVSLFISKWMAKMTTGTQIITQPRTRHEQWLLQTVEELSREAGIKMPEVGIFPAYEANAFATGWNRNDALVAVSQGLLERFSPDEVRAVLAHEIGHVANGDMVTMALVQGVVNTFVMFFARIIGNFVDRVIFKNEEGHGIAYFVATIVAELVLGILASIIVMWYSRRREFRADEAGAHLAGTGAMIGALQRLRSEQGLPVHMPDTMKAFGINGGLKHGLAGLLMSHPPLEDRIDALRRRG.

The next 2 helical transmembrane spans lie at 4 to 24 and 41 to 61; these read ILLF…TLSL and GQLL…SLFI. Residue His-147 participates in Zn(2+) binding. The active site involves Glu-148. Residue His-151 participates in Zn(2+) binding. Transmembrane regions (helical) follow at residues 158–178 and 198–218; these read VTMA…ARII and FVAT…IVMW. A Zn(2+)-binding site is contributed by Glu-224.

The protein belongs to the peptidase M48B family. Zn(2+) serves as cofactor.

The protein resides in the cell inner membrane. This is Protease HtpX from Pseudomonas entomophila (strain L48).